Here is a 192-residue protein sequence, read N- to C-terminus: Chromophore lyase CpcS/CpeS 2 (192 aa).

Belongs to the CpcS/CpeS biliprotein lyase family.

Functionally, covalently attaches a chromophore to Cys residue(s) of phycobiliproteins. This Synechocystis sp. (strain ATCC 27184 / PCC 6803 / Kazusa) protein is Chromophore lyase CpcS/CpeS 2.